Here is a 109-residue protein sequence, read N- to C-terminus: Large ribosomal subunit protein uL22 (109 aa).

Belongs to the universal ribosomal protein uL22 family. Part of the 50S ribosomal subunit.

Functionally, this protein binds specifically to 23S rRNA; its binding is stimulated by other ribosomal proteins, e.g. L4, L17, and L20. It is important during the early stages of 50S assembly. It makes multiple contacts with different domains of the 23S rRNA in the assembled 50S subunit and ribosome. The globular domain of the protein is located near the polypeptide exit tunnel on the outside of the subunit, while an extended beta-hairpin is found that lines the wall of the exit tunnel in the center of the 70S ribosome. This Bordetella avium (strain 197N) protein is Large ribosomal subunit protein uL22.